The chain runs to 413 residues: Methylaspartate ammonia-lyase (413 aa).

Residue Gln172 coordinates (2S,3S)-3-methyl-L-aspartate. Mg(2+)-binding residues include Asp238, Glu273, and Asp307. Gln329 lines the (2S,3S)-3-methyl-L-aspartate pocket. Lys331 (proton acceptor) is an active-site residue. (2S,3S)-3-methyl-L-aspartate is bound by residues 360 to 361 and Cys361; that span reads TC.

Belongs to the methylaspartate ammonia-lyase family. As to quaternary structure, homodimer. Mg(2+) is required as a cofactor.

It catalyses the reaction (2S,3S)-3-methyl-L-aspartate = mesaconate + NH4(+). It functions in the pathway amino-acid degradation; L-glutamate degradation via mesaconate pathway; acetate and pyruvate from L-glutamate: step 2/4. Its activity is regulated as follows. Inhibited by calcium ions. Involved in the methylaspartate cycle. Catalyzes the formation of the alpha,beta-unsaturated bond by the reversible anti elimination of ammonia from L-threo-beta-methylaspartate (L-threo-(2S,3S)-3-methylaspartate) to give mesaconate. It can also use L-erythro-beta-methylaspartate (L-erythro-(2S,3R)-3-methylaspartate), L-aspartate, fumarate and ethylfumarate as substrates. In Clostridium tetanomorphum, this protein is Methylaspartate ammonia-lyase.